The sequence spans 115 residues: Large ribosomal subunit protein uL22 (115 aa).

It belongs to the universal ribosomal protein uL22 family. As to quaternary structure, part of the 50S ribosomal subunit.

This protein binds specifically to 23S rRNA; its binding is stimulated by other ribosomal proteins, e.g. L4, L17, and L20. It is important during the early stages of 50S assembly. It makes multiple contacts with different domains of the 23S rRNA in the assembled 50S subunit and ribosome. Its function is as follows. The globular domain of the protein is located near the polypeptide exit tunnel on the outside of the subunit, while an extended beta-hairpin is found that lines the wall of the exit tunnel in the center of the 70S ribosome. The sequence is that of Large ribosomal subunit protein uL22 from Coxiella burnetii (strain CbuK_Q154) (Coxiella burnetii (strain Q154)).